Reading from the N-terminus, the 1080-residue chain is Histone deacetylase 4 (1080 aa).

Disordered regions lie at residues Met-1 to Val-25, Lys-132 to Val-165, and Thr-205 to Glu-312. Residues Lys-132–Glu-162 are compositionally biased toward basic and acidic residues. A compositionally biased stretch (polar residues) spans Thr-205–Tyr-224. Composition is skewed to basic and acidic residues over residues Asp-233–Ala-244 and Lys-258–Gly-273. Positions Ser-289–Glu-312 are enriched in low complexity. The PxLPxI/L motif lies at Pro-348–Ile-353. Disordered stretches follow at residues Lys-506–Glu-527, Glu-558–Gln-579, and Pro-622–Pro-646. A compositionally biased stretch (basic and acidic residues) spans Glu-509–Glu-527. Positions Ile-560–Gln-571 are enriched in acidic residues. Over residues Arg-625–Met-637 the composition is skewed to polar residues. The histone deacetylase stretch occupies residues Gly-651–Leu-1080. Zn(2+) is bound by residues Cys-663, Cys-665, His-671, and Cys-747. His-799 is a catalytic residue. The segment at Met-1055–Leu-1080 is disordered.

It belongs to the histone deacetylase family. HD type 2 subfamily.

The protein localises to the nucleus. The catalysed reaction is N(6)-acetyl-L-lysyl-[histone] + H2O = L-lysyl-[histone] + acetate. Functionally, responsible for the deacetylation of lysine residues on the N-terminal part of the core histones (H2A, H2B, H3 and H4). Histone deacetylation gives a tag for epigenetic repression and plays an important role in transcriptional regulation, cell cycle progression and developmental events. Histone deacetylases act via the formation of large multiprotein complexes. This is Histone deacetylase 4 (HDAC4) from Gallus gallus (Chicken).